The primary structure comprises 433 residues: Glutamate-1-semialdehyde 2,1-aminomutase (433 aa).

An N6-(pyridoxal phosphate)lysine modification is found at lysine 273.

It belongs to the class-III pyridoxal-phosphate-dependent aminotransferase family. HemL subfamily. In terms of assembly, homodimer. Pyridoxal 5'-phosphate serves as cofactor.

The protein resides in the cytoplasm. The catalysed reaction is (S)-4-amino-5-oxopentanoate = 5-aminolevulinate. It participates in porphyrin-containing compound metabolism; protoporphyrin-IX biosynthesis; 5-aminolevulinate from L-glutamyl-tRNA(Glu): step 2/2. The protein is Glutamate-1-semialdehyde 2,1-aminomutase of Polynucleobacter necessarius subsp. necessarius (strain STIR1).